The primary structure comprises 234 residues: Uridylate kinase (234 aa).

An ATP-binding site is contributed by 9–12 (KLSG). Residue G51 coordinates UMP. 2 residues coordinate ATP: G52 and R56. Residues D71 and 132–139 (CGNPFFTT) contribute to the UMP site. Positions 159, 165, and 168 each coordinate ATP.

It belongs to the UMP kinase family. In terms of assembly, homohexamer.

It localises to the cytoplasm. The enzyme catalyses UMP + ATP = UDP + ADP. The protein operates within pyrimidine metabolism; CTP biosynthesis via de novo pathway; UDP from UMP (UMPK route): step 1/1. With respect to regulation, inhibited by UTP. In terms of biological role, catalyzes the reversible phosphorylation of UMP to UDP. The sequence is that of Uridylate kinase from Prochlorococcus marinus (strain MIT 9515).